Consider the following 188-residue polypeptide: Josephin-2 (188 aa).

Residues 11–188 (PPTVYHERQR…EEKGSWLRTD (178 aa)) enclose the Josephin domain. The Nucleophile role is filled by C24. Residue H125 is the Proton acceptor of the active site.

The protein resides in the cytoplasm. It is found in the cytosol. The catalysed reaction is Thiol-dependent hydrolysis of ester, thioester, amide, peptide and isopeptide bonds formed by the C-terminal Gly of ubiquitin (a 76-residue protein attached to proteins as an intracellular targeting signal).. Cleaves 'Lys-63'-linked poly-ubiquitin chains, and with lesser efficiency 'Lys-48'-linked poly-ubiquitin chains (in vitro). May act as a deubiquitinating enzyme. This Homo sapiens (Human) protein is Josephin-2 (JOSD2).